The chain runs to 940 residues: Translation initiation factor IF-2 (940 aa).

Disordered stretches follow at residues 116 to 137, 151 to 196, 210 to 294, and 318 to 346; these read PEQEQLESTSVAEIPESVSSDT, EVEA…EQRS, AVRK…VKKV, and HSAPKSKKGGQNNNSSNSGSRPLIKVANR. The span at 121 to 137 shows a compositional bias: polar residues; the sequence is LESTSVAEIPESVSSDT. The span at 159 to 180 shows a compositional bias: acidic residues; it reads PEPEVEATPEPEVEDVVAEEAE. Low complexity predominate over residues 181–193; the sequence is PAAAEPAPAPVVE. Residues 213–239 are compositionally biased toward basic and acidic residues; the sequence is KKAEEEAEVARRKADAEKAEAAAKQKA. Over residues 282–294 the composition is skewed to basic residues; the sequence is KHNKKAGKAVKKV. A compositionally biased stretch (low complexity) spans 326-337; it reads GGQNNNSSNSGS. The tr-type G domain maps to 441-610; it reads ARAPVVTVMG…ALQAELLELS (170 aa). The segment at 450–457 is G1; sequence GHVDHGKT. A GTP-binding site is contributed by 450–457; that stretch reads GHVDHGKT. Positions 475–479 are G2; that stretch reads GITQH. The interval 496–499 is G3; that stretch reads DTPG. GTP contacts are provided by residues 496–500 and 550–553; these read DTPGH and NKID. The G4 stretch occupies residues 550-553; the sequence is NKID. The tract at residues 586–588 is G5; the sequence is SAQ.

This sequence belongs to the TRAFAC class translation factor GTPase superfamily. Classic translation factor GTPase family. IF-2 subfamily.

Its subcellular location is the cytoplasm. Its function is as follows. One of the essential components for the initiation of protein synthesis. Protects formylmethionyl-tRNA from spontaneous hydrolysis and promotes its binding to the 30S ribosomal subunits. Also involved in the hydrolysis of GTP during the formation of the 70S ribosomal complex. The protein is Translation initiation factor IF-2 of Teredinibacter turnerae (strain ATCC 39867 / T7901).